Consider the following 136-residue polypeptide: ATP synthase epsilon chain (136 aa).

Positions 100 to 120 (QGALEEANRGEDKPNQLKASN) are disordered. The span at 105-114 (EANRGEDKPN) shows a compositional bias: basic and acidic residues.

Belongs to the ATPase epsilon chain family. In terms of assembly, F-type ATPases have 2 components, CF(1) - the catalytic core - and CF(0) - the membrane proton channel. CF(1) has five subunits: alpha(3), beta(3), gamma(1), delta(1), epsilon(1). CF(0) has three main subunits: a, b and c.

It is found in the cellular thylakoid membrane. Its function is as follows. Produces ATP from ADP in the presence of a proton gradient across the membrane. In Synechocystis sp. (strain ATCC 27184 / PCC 6803 / Kazusa), this protein is ATP synthase epsilon chain (atpC).